A 493-amino-acid chain; its full sequence is Ubiquitin carboxyl-terminal hydrolase 14 (493 aa).

The Ubiquitin-like domain maps to 4 to 80; it reads YSVTVKWGKE…MMGSADALPE (77 aa). T52 is subject to Phosphothreonine. The USP domain maps to 105–483; sequence CGLTNLGNTC…IAYVLLYGPR (379 aa). Residue C114 is the Nucleophile of the active site. Phosphoserine is present on residues S143 and S148. Residue T235 is modified to Phosphothreonine. Residues S237, S302, and S432 each carry the phosphoserine modification. Residue H435 is the Proton acceptor of the active site. Position 449 is an N6-acetyllysine (K449).

Belongs to the peptidase C19 family. USP14/UBP6 subfamily. As to quaternary structure, homodimer (Potential). Associates with the 26S proteasome. Interacts with FANCC, CXCR4 and ERN1. Interacts with TRIM14; this interaction recruits USP14 to cleave ubiquitin chains of CGAS and KDM4D.

It is found in the cytoplasm. Its subcellular location is the cell membrane. The catalysed reaction is Thiol-dependent hydrolysis of ester, thioester, amide, peptide and isopeptide bonds formed by the C-terminal Gly of ubiquitin (a 76-residue protein attached to proteins as an intracellular targeting signal).. Proteasome-associated deubiquitinase which releases ubiquitin from the proteasome targeted ubiquitinated proteins. Ensures the regeneration of ubiquitin at the proteasome. Is a reversibly associated subunit of the proteasome and a large fraction of proteasome-free protein exists within the cell. Required for the degradation of the chemokine receptor CXCR4 which is critical for CXCL12-induced cell chemotaxis. Also serves as a physiological inhibitor of endoplasmic reticulum-associated degradation (ERAD) under the non-stressed condition by inhibiting the degradation of unfolded endoplasmic reticulum proteins via interaction with ERN1. Indispensable for synaptic development and function at neuromuscular junctions (NMJs). Plays a role in the innate immune defense against viruses by stabilizing the viral DNA sensor CGAS and thus inhibiting its autophagic degradation. Inhibits OPTN-mediated selective autophagic degradation of KDM4D and thereby negatively regulates H3K9me2 and H3K9me3. The chain is Ubiquitin carboxyl-terminal hydrolase 14 (USP14) from Pan troglodytes (Chimpanzee).